The primary structure comprises 626 residues: Putative L-type lectin-domain containing receptor kinase V.8 (626 aa).

A signal peptide spans 1 to 21; it reads MPSELKVLHIVLVLLYTLSSS. The tract at residues 22–212 is legume-lectin like; sequence TYNSNGNWTL…SIGAFHYMLS (191 aa). Residues 22–245 are Extracellular-facing; sequence TYNSNGNWTL…PKKSSDRTKK (224 aa). 4 N-linked (GlcNAc...) asparagine glycosylation sites follow: asparagine 28, asparagine 59, asparagine 112, and asparagine 162. The helical transmembrane segment at 246–266 threads the bilayer; sequence ILAVCLTLAVFAVFVASGICF. At 267–626 the chain is on the cytoplasmic side; the sequence is VFYTRHKKVK…LTNSFLSHGR (360 aa). In terms of domain architecture, Protein kinase spans 303–562; the sequence is FKEKQLLGKG…GLLCAHHTEL (260 aa). ATP-binding positions include 309–317 and lysine 332; that span reads LGKGGFGQV. Aspartate 429 serves as the catalytic Proton acceptor.

In the C-terminal section; belongs to the protein kinase superfamily. Ser/Thr protein kinase family. This sequence in the N-terminal section; belongs to the leguminous lectin family.

It is found in the cell membrane. The enzyme catalyses L-seryl-[protein] + ATP = O-phospho-L-seryl-[protein] + ADP + H(+). The catalysed reaction is L-threonyl-[protein] + ATP = O-phospho-L-threonyl-[protein] + ADP + H(+). This Arabidopsis thaliana (Mouse-ear cress) protein is Putative L-type lectin-domain containing receptor kinase V.8 (LECRK58).